The sequence spans 300 residues: tRNA pseudouridine synthase B (300 aa).

D38 acts as the Nucleophile in catalysis.

It belongs to the pseudouridine synthase TruB family. Type 1 subfamily.

It catalyses the reaction uridine(55) in tRNA = pseudouridine(55) in tRNA. Functionally, responsible for synthesis of pseudouridine from uracil-55 in the psi GC loop of transfer RNAs. In Dehalococcoides mccartyi (strain ATCC BAA-2100 / JCM 16839 / KCTC 5957 / BAV1), this protein is tRNA pseudouridine synthase B.